The primary structure comprises 224 residues: 7-cyano-7-deazaguanine synthase (224 aa).

Residue 14–24 (FSGGQDSTTCL) participates in ATP binding. Zn(2+) contacts are provided by Cys-190, Cys-198, Cys-201, and Cys-204.

This sequence belongs to the QueC family. Zn(2+) serves as cofactor.

The catalysed reaction is 7-carboxy-7-deazaguanine + NH4(+) + ATP = 7-cyano-7-deazaguanine + ADP + phosphate + H2O + H(+). It functions in the pathway purine metabolism; 7-cyano-7-deazaguanine biosynthesis. In terms of biological role, catalyzes the ATP-dependent conversion of 7-carboxy-7-deazaguanine (CDG) to 7-cyano-7-deazaguanine (preQ(0)). The polypeptide is 7-cyano-7-deazaguanine synthase (Haemophilus ducreyi (strain 35000HP / ATCC 700724)).